Reading from the N-terminus, the 95-residue chain is Aspartyl/glutamyl-tRNA(Asn/Gln) amidotransferase subunit C (95 aa).

It belongs to the GatC family. Heterotrimer of A, B and C subunits.

The catalysed reaction is L-glutamyl-tRNA(Gln) + L-glutamine + ATP + H2O = L-glutaminyl-tRNA(Gln) + L-glutamate + ADP + phosphate + H(+). It catalyses the reaction L-aspartyl-tRNA(Asn) + L-glutamine + ATP + H2O = L-asparaginyl-tRNA(Asn) + L-glutamate + ADP + phosphate + 2 H(+). Its function is as follows. Allows the formation of correctly charged Asn-tRNA(Asn) or Gln-tRNA(Gln) through the transamidation of misacylated Asp-tRNA(Asn) or Glu-tRNA(Gln) in organisms which lack either or both of asparaginyl-tRNA or glutaminyl-tRNA synthetases. The reaction takes place in the presence of glutamine and ATP through an activated phospho-Asp-tRNA(Asn) or phospho-Glu-tRNA(Gln). The chain is Aspartyl/glutamyl-tRNA(Asn/Gln) amidotransferase subunit C from Chlorobium phaeovibrioides (strain DSM 265 / 1930) (Prosthecochloris vibrioformis (strain DSM 265)).